We begin with the raw amino-acid sequence, 391 residues long: Elongation factor Tu 1 (391 aa).

Residues 10 to 201 (KPHVNIGTIG…AVDSYIPTPE (192 aa)) form the tr-type G domain. The interval 19–26 (GHVDHGKT) is G1. 19-26 (GHVDHGKT) contacts GTP. Thr-26 contributes to the Mg(2+) binding site. The segment at 55 to 59 (GITIS) is G2. Residues 76–79 (DCPG) are G3. GTP contacts are provided by residues 76-80 (DCPGH) and 131-134 (NKVD). The segment at 131-134 (NKVD) is G4. Residues 169–171 (SAL) are G5.

The protein belongs to the TRAFAC class translation factor GTPase superfamily. Classic translation factor GTPase family. EF-Tu/EF-1A subfamily. As to quaternary structure, monomer.

It localises to the cytoplasm. It catalyses the reaction GTP + H2O = GDP + phosphate + H(+). In terms of biological role, GTP hydrolase that promotes the GTP-dependent binding of aminoacyl-tRNA to the A-site of ribosomes during protein biosynthesis. The protein is Elongation factor Tu 1 of Rhizobium etli (strain ATCC 51251 / DSM 11541 / JCM 21823 / NBRC 15573 / CFN 42).